Consider the following 334-residue polypeptide: MIEADRLISAEPINEEEILDRAIRPKLLTEYVGQPHVREQMEIFIQAAKQRGDALDHLLIFGPPGLGKTTLANIVANEMGVNLRTTSGPVLEKAGDLAAMLTNLEPHDVLFIDEIHRLSPVVEEVLYPAMEDYQLDIMIGEGPAARSIKLDLPPFTLVGATTRAGSLTSPLRDRFGIVQRLEFYQVADLQHIVSRSANCLGLDLSEEGAHQVARRARGTPRIANRLLRRVRDFAEVRANGVINGEVAMQALDMLNVDAEGFDYMDRKLLLAIIDKFTGGPVGLDNLAAAIGEERETIEDVIEPFLIQQGFIQRTPRGRMATNHAYKHFGMVREE.

Positions alanine 4–tyrosine 184 are large ATPase domain (RuvB-L). ATP is bound by residues isoleucine 23, arginine 24, glycine 65, lysine 68, threonine 69, threonine 70, glutamate 131 to tyrosine 133, arginine 174, tyrosine 184, and arginine 221. Residue threonine 69 participates in Mg(2+) binding. Positions glutamine 185–asparagine 255 are small ATPAse domain (RuvB-S). Residues alanine 258–glutamate 334 form a head domain (RuvB-H) region. Arginine 294, arginine 313, and arginine 318 together coordinate DNA.

It belongs to the RuvB family. Homohexamer. Forms an RuvA(8)-RuvB(12)-Holliday junction (HJ) complex. HJ DNA is sandwiched between 2 RuvA tetramers; dsDNA enters through RuvA and exits via RuvB. An RuvB hexamer assembles on each DNA strand where it exits the tetramer. Each RuvB hexamer is contacted by two RuvA subunits (via domain III) on 2 adjacent RuvB subunits; this complex drives branch migration. In the full resolvosome a probable DNA-RuvA(4)-RuvB(12)-RuvC(2) complex forms which resolves the HJ.

It is found in the cytoplasm. It carries out the reaction ATP + H2O = ADP + phosphate + H(+). The RuvA-RuvB-RuvC complex processes Holliday junction (HJ) DNA during genetic recombination and DNA repair, while the RuvA-RuvB complex plays an important role in the rescue of blocked DNA replication forks via replication fork reversal (RFR). RuvA specifically binds to HJ cruciform DNA, conferring on it an open structure. The RuvB hexamer acts as an ATP-dependent pump, pulling dsDNA into and through the RuvAB complex. RuvB forms 2 homohexamers on either side of HJ DNA bound by 1 or 2 RuvA tetramers; 4 subunits per hexamer contact DNA at a time. Coordinated motions by a converter formed by DNA-disengaged RuvB subunits stimulates ATP hydrolysis and nucleotide exchange. Immobilization of the converter enables RuvB to convert the ATP-contained energy into a lever motion, pulling 2 nucleotides of DNA out of the RuvA tetramer per ATP hydrolyzed, thus driving DNA branch migration. The RuvB motors rotate together with the DNA substrate, which together with the progressing nucleotide cycle form the mechanistic basis for DNA recombination by continuous HJ branch migration. Branch migration allows RuvC to scan DNA until it finds its consensus sequence, where it cleaves and resolves cruciform DNA. The polypeptide is Holliday junction branch migration complex subunit RuvB (Serratia proteamaculans (strain 568)).